Reading from the N-terminus, the 1816-residue chain is Laminin subunit alpha-4 (1816 aa).

The signal sequence occupies residues 1–24 (MGWSTAWCSVLALWLLWCAVCSNA). O-linked (Xyl...) (chondroitin sulfate) serine glycosylation occurs at serine 39. Cystine bridges form between cysteine 82–cysteine 91, cysteine 84–cysteine 98, cysteine 101–cysteine 110, cysteine 113–cysteine 129, cysteine 132–cysteine 146, cysteine 134–cysteine 155, cysteine 157–cysteine 166, cysteine 169–cysteine 184, cysteine 187–cysteine 202, cysteine 189–cysteine 209, cysteine 212–cysteine 221, and cysteine 224–cysteine 238. Laminin EGF-like domains are found at residues 82–131 (CDCN…FCQP), 132–186 (CPCP…TCKK), and 187–240 (CDCS…NCAV). N-linked (GlcNAc...) asparagine glycosylation is present at asparagine 104. Asparagine 215 is a glycosylation site (N-linked (GlcNAc...) asparagine). The 15-residue stretch at 241–255 (CNCGGGPCDSVTGEC) folds into the Laminin EGF-like 4; truncated domain. The domain II and I stretch occupies residues 256 to 825 (LEEGFEVPTG…AQTRSVASKI (570 aa)). Residues asparagine 308, asparagine 333, asparagine 458, asparagine 550, asparagine 571, asparagine 574, asparagine 631, and asparagine 639 are each glycosylated (N-linked (GlcNAc...) asparagine). Residues 431 to 523 (THRELVDEEA…ERVKEQMEVV (93 aa)) adopt a coiled-coil conformation. The stretch at 556-604 (AEIDGAKNELQGKLSNLSNLSHDLVQEATDHAYNLQQEADELSRNLHSS) forms a coiled coil. Residues 655–717 (IIYHKDESDN…AVKQLQAAER (63 aa)) are a coiled coil. Residues 717 to 719 (RGD) carry the Cell attachment site motif. Asparagine 735, asparagine 751, asparagine 754, asparagine 780, and asparagine 803 each carry an N-linked (GlcNAc...) asparagine glycan. Residues 770–799 (AVDSARDAVRNLTEVVPQLLDQLRTVEQKR) are a coiled coil. Laminin G-like domains lie at 826-1030 (QVSM…SVPC), 1042-1222 (AASY…GYGC), and 1229-1397 (SRRA…LYEC). Cysteines 1000 and 1030 form a disulfide. An N-linked (GlcNAc...) asparagine glycan is attached at asparagine 1088. Cysteine 1196 and cysteine 1222 are disulfide-bonded. Asparagine 1283 and asparagine 1361 each carry an N-linked (GlcNAc...) asparagine glycan. A disulfide bond links cysteine 1365 and cysteine 1397. Basic residues predominate over residues 1409 to 1419 (KKGKNSSKPKT). The interval 1409-1433 (KKGKNSSKPKTNKQGEKSKDAPSWD) is disordered. A compositionally biased stretch (basic and acidic residues) spans 1421-1430 (KQGEKSKDAP). 2 Laminin G-like domains span residues 1462–1633 (AYQY…VTPC) and 1640–1813 (TGTY…INSC). 2 disulfides stabilise this stretch: cysteine 1610/cysteine 1633 and cysteine 1785/cysteine 1813.

Laminin is a complex glycoprotein, consisting of three different polypeptide chains (alpha, beta, gamma), which are bound to each other by disulfide bonds into a cross-shaped molecule comprising one long and three short arms with globules at each end. Alpha-4 is a subunit of laminin-8 (laminin-411), laminin-9 (laminin-421) and laminin-14 (laminin-423). In terms of tissue distribution, strongly expressed in peripheral nerves, cardiac muscle, fat, dermis, lung stroma, aortic endothelium, endocardium and endothelium of blood vessels in skin and brain.

It is found in the secreted. The protein localises to the extracellular space. It localises to the extracellular matrix. Its subcellular location is the basement membrane. In terms of biological role, binding to cells via a high affinity receptor, laminin is thought to mediate the attachment, migration and organization of cells into tissues during embryonic development by interacting with other extracellular matrix components. The sequence is that of Laminin subunit alpha-4 (Lama4) from Mus musculus (Mouse).